The following is a 308-amino-acid chain: Carbonic anhydrase 6 (308 aa).

Residues 1–17 (MRALVLLLSLFLLGGQA) form the signal peptide. The Alpha-carbonic anhydrase domain maps to 21-278 (SDWTYSEGAL…LNHRVVESNF (258 aa)). The cysteines at positions 42 and 224 are disulfide-linked. A glycan (N-linked (GlcNAc...) asparagine) is linked at Asn67. His85 serves as the catalytic Proton donor/acceptor. Zn(2+)-binding residues include His111, His113, and His138. 220-221 (TT) lines the substrate pocket. Asn256 carries an N-linked (GlcNAc...) asparagine glycan.

Belongs to the alpha-carbonic anhydrase family. The cofactor is Zn(2+). As to expression, major constituent of saliva.

It is found in the secreted. It carries out the reaction hydrogencarbonate + H(+) = CO2 + H2O. Its activity is regulated as follows. Inhibited by coumarins, sulfonamide derivatives such as acetazolamide (AZA), saccharin and Foscarnet (phosphonoformate trisodium salt). Reversible hydration of carbon dioxide. Its role in saliva is unknown. This is Carbonic anhydrase 6 (CA6) from Homo sapiens (Human).